We begin with the raw amino-acid sequence, 375 residues long: Proclotting enzyme (375 aa).

The signal sequence occupies residues 1 to 21 (MLVNNVFSLLCFPLLMSVVRC). A propeptide spanning residues 22–27 (STLSRQ) is cleaved from the precursor. At Gln-30 the chain carries Pyrrolidone carboxylic acid. Positions 39-84 (LCSNRFTEEGTCKNVLDCRILLQKNDYNLLKESICGFEGITPKVCC) constitute a Clip domain. 3 disulfides stabilise this stretch: Cys-40/Cys-83, Cys-50/Cys-73, and Cys-56/Cys-84. The tract at residues 90-113 (VISSTQAPPETTTTERPPKQIPPN) is disordered. Intrachain disulfides connect Cys-118-Cys-248, Cys-157-Cys-173, Cys-295-Cys-311, and Cys-322-Cys-351. Asn-122 carries N-linked (GlcNAc...) asparagine glycosylation. The 248-residue stretch at 128-375 (IIGGREAPIG…FLDWIAEHMV (248 aa)) folds into the Peptidase S1 domain. The Charge relay system role is filled by His-172. Ca(2+) contacts are provided by Glu-194, Asn-196, Ser-199, and Asp-202. Asp-228 (charge relay system) is an active-site residue. Residues Asn-235 and Asn-304 are each glycosylated (N-linked (GlcNAc...) asparagine). Ser-326 (charge relay system) is an active-site residue.

The protein belongs to the peptidase S1 family. CLIP subfamily. In terms of assembly, in the active form, heterodimer of a light chain and a heavy chain; disulfide-linked. Forms a covalent heterodimer with intracellular coagulation inhibitor 2/LICI-2. Proteolytically cleaved into its mature active form by serine protease factor B. Cleavage produces a 25 kDa light chain containing the CLIP domain and a catalytic 31 kDa heavy chain which remain covalently associated through an interchain disulfide bond. Proteolytically cleaved by clotting factor G subunit beta. In terms of processing, contains six O-linked carbohydrate chains in the N-terminal light chain. Expressed in hemocytes (at protein level).

It localises to the cytoplasmic vesicle. Its subcellular location is the secretory vesicle. The protein resides in the secreted. It carries out the reaction Selective cleavage of 18-Arg-|- and 47-Arg-|- bonds in coagulogen to form coagulin and fragments.. Inhibited by intracellular coagulation inhibitor 2/LICI-2 and to a lesser extent by intracellular coagulation inhibitor 3/LICI-3. In terms of biological role, this enzyme is closely associated with an endotoxin-sensitive hemolymph coagulation system in limulus. Its active form catalyzes the conversion of coagulogen to insoluble coagulin gel. The sequence is that of Proclotting enzyme from Tachypleus tridentatus (Japanese horseshoe crab).